The following is a 152-amino-acid chain: Large ribosomal subunit protein uL15 (152 aa).

Positions 1–55 (MRLHELKPNEGATHKKKRVGRGIGSGHGKTSTKGQKGQTSRSGDSKLPARFEGGQ) are disordered. The segment covering 28–42 (GKTSTKGQKGQTSRS) has biased composition (polar residues).

This sequence belongs to the universal ribosomal protein uL15 family. Part of the 50S ribosomal subunit.

Its function is as follows. Binds to the 23S rRNA. The sequence is that of Large ribosomal subunit protein uL15 from Sulfurihydrogenibium sp. (strain YO3AOP1).